Consider the following 541-residue polypeptide: Chaperonin GroEL 2 (541 aa).

ATP is bound by residues 29-32 (TLGP), 86-90 (DGTTT), glycine 413, 476-478 (NAA), and aspartate 492.

This sequence belongs to the chaperonin (HSP60) family. As to quaternary structure, forms a cylinder of 14 subunits composed of two heptameric rings stacked back-to-back. Interacts with the co-chaperonin GroES.

The protein resides in the secreted. The protein localises to the capsule. It is found in the cell surface. Its subcellular location is the cell wall. It carries out the reaction ATP + H2O + a folded polypeptide = ADP + phosphate + an unfolded polypeptide.. In terms of biological role, together with its co-chaperonin GroES, plays an essential role in assisting protein folding. The GroEL-GroES system forms a nano-cage that allows encapsulation of the non-native substrate proteins and provides a physical environment optimized to promote and accelerate protein folding. The sequence is that of Chaperonin GroEL 2 from Mycolicibacterium paratuberculosis (strain ATCC BAA-968 / K-10) (Mycobacterium paratuberculosis).